We begin with the raw amino-acid sequence, 91 residues long: Small ribosomal subunit protein uS15c (91 aa).

The protein belongs to the universal ribosomal protein uS15 family. In terms of assembly, part of the 30S ribosomal subunit.

It is found in the plastid. Its subcellular location is the chloroplast. The chain is Small ribosomal subunit protein uS15c (rps15) from Phalaenopsis aphrodite subsp. formosana (Moth orchid).